Here is a 303-residue protein sequence, read N- to C-terminus: Growth/differentiation factor 15 (303 aa).

Residues 1–30 (MALRALHAQPTGGPQLRFLLFLLLLLLLLS) form the signal peptide. A propeptide spanning residues 31-188 (WPSQGDALAL…LRSAAGRGRR (158 aa)) is cleaved from the precursor. N-linked (GlcNAc...) asparagine glycosylation is present at Asn-71. Disulfide bonds link Cys-198–Cys-205, Cys-206–Cys-269, Cys-235–Cys-300, and Cys-239–Cys-302.

The protein belongs to the TGF-beta family. In terms of assembly, homodimer; disulfide-linked. Interacts with GFRAL and RET; ligand of GFRAL, which mediates GDF15 internalization and cellular signaling through interaction with RET via the formation of a 2:2:2 ternary complex composed of GDF15, GFRAL and RET. As to expression, detected in plasma (at protein level).

The protein localises to the secreted. In terms of biological role, hormone produced in response to various stresses to confer information about those stresses to the brain, and trigger an aversive response, characterized by nausea and/or loss of appetite. The aversive response is both required to reduce continuing exposure to those stresses at the time of exposure and to promote avoidance behavior in the future. Acts by binding to its receptor, GFRAL, activating GFRAL-expressing neurons localized in the area postrema and nucleus tractus solitarius of the brainstem. It then triggers the activation of neurons localized within the parabrachial nucleus and central amygdala, which constitutes part of the 'emergency circuit' that shapes responses to stressful conditions. The GDF15-GFRAL signal induces expression of genes involved in metabolism, such as lipid metabolism in adipose tissues. Contributes to the effect of metformin, an anti-diabetic drug, on appetite reduction and weight loss: produced in the kidney in response to metformin treatment, thereby activating the GDF15-GFRAL response, leading to reduced appetite and weight. Required for avoidance behavior in response to food allergens: induced downstream of mast cell activation to promote aversion and minimize harmful effects of exposure to noxious substances. Produced in response to anticancer drugs, such as camptothecin or cisplatin, promoting nausea and contributing to malnutrition. Overproduced in many cancers, promoting anorexia in cancer (cachexia). Responsible for the risk of nausea during pregnancy: high levels of GDF15 during pregnancy, mostly originating from embryos, are associated with increased nausea. Maternal sensitivity to nausea is probably determined by pre-pregnancy exposure to GDF15, females with naturally high level of GDF15 being less susceptible to nausea than female rats with low levels of GDF15 before pregnancy. Promotes metabolic adaptation in response to systemic inflammation caused by bacterial and viral infections in order to promote tissue tolerance and prevent tissue damage. Required for tissue tolerance in response to myocardial infarction by acting as an inhibitor of leukocyte integring activation, thereby protecting against cardiac rupture. Inhibits growth hormone signaling on hepatocytes. The protein is Growth/differentiation factor 15 of Rattus norvegicus (Rat).